A 436-amino-acid polypeptide reads, in one-letter code: 3-ketoacyl-CoA thiolase (436 aa).

Cysteine 99 acts as the Acyl-thioester intermediate in catalysis. Catalysis depends on proton acceptor residues histidine 392 and cysteine 422.

Belongs to the thiolase-like superfamily. Thiolase family. As to quaternary structure, heterotetramer of two alpha chains (FadJ) and two beta chains (FadI).

The protein resides in the cytoplasm. The catalysed reaction is an acyl-CoA + acetyl-CoA = a 3-oxoacyl-CoA + CoA. Its pathway is lipid metabolism; fatty acid beta-oxidation. Catalyzes the final step of fatty acid oxidation in which acetyl-CoA is released and the CoA ester of a fatty acid two carbons shorter is formed. The sequence is that of 3-ketoacyl-CoA thiolase from Shewanella amazonensis (strain ATCC BAA-1098 / SB2B).